The chain runs to 423 residues: Serine--tRNA ligase 2 (423 aa).

231 to 233 (TAE) contributes to the L-serine binding site. 262–264 (RSE) contributes to the ATP binding site. E285 lines the L-serine pocket. 349–352 (EISS) contributes to the ATP binding site. Residue S384 coordinates L-serine.

This sequence belongs to the class-II aminoacyl-tRNA synthetase family. Type-1 seryl-tRNA synthetase subfamily. In terms of assembly, homodimer. The tRNA molecule binds across the dimer.

The protein resides in the cytoplasm. The catalysed reaction is tRNA(Ser) + L-serine + ATP = L-seryl-tRNA(Ser) + AMP + diphosphate + H(+). It carries out the reaction tRNA(Sec) + L-serine + ATP = L-seryl-tRNA(Sec) + AMP + diphosphate + H(+). Its pathway is aminoacyl-tRNA biosynthesis; selenocysteinyl-tRNA(Sec) biosynthesis; L-seryl-tRNA(Sec) from L-serine and tRNA(Sec): step 1/1. Functionally, catalyzes the attachment of serine to tRNA(Ser). Is also able to aminoacylate tRNA(Sec) with serine, to form the misacylated tRNA L-seryl-tRNA(Sec), which will be further converted into selenocysteinyl-tRNA(Sec). This is Serine--tRNA ligase 2 from Enterococcus faecalis (strain ATCC 700802 / V583).